The primary structure comprises 1414 residues: DNA-directed RNA polymerase subunit beta' (1414 aa).

Residues cysteine 70, cysteine 72, cysteine 85, and cysteine 88 each contribute to the Zn(2+) site. The Mg(2+) site is built by aspartate 460, aspartate 462, and aspartate 464. Zn(2+) contacts are provided by cysteine 814, cysteine 888, cysteine 895, and cysteine 898. Low complexity predominate over residues 1392–1403 (EQALSEALKSSA). Residues 1392-1414 (EQALSEALKSSAPQEAKAAQKDE) are disordered.

This sequence belongs to the RNA polymerase beta' chain family. As to quaternary structure, the RNAP catalytic core consists of 2 alpha, 1 beta, 1 beta' and 1 omega subunit. When a sigma factor is associated with the core the holoenzyme is formed, which can initiate transcription. The cofactor is Mg(2+). Requires Zn(2+) as cofactor.

The enzyme catalyses RNA(n) + a ribonucleoside 5'-triphosphate = RNA(n+1) + diphosphate. In terms of biological role, DNA-dependent RNA polymerase catalyzes the transcription of DNA into RNA using the four ribonucleoside triphosphates as substrates. The protein is DNA-directed RNA polymerase subunit beta' of Coxiella burnetii (strain Dugway 5J108-111).